Reading from the N-terminus, the 203-residue chain is V-type ATP synthase subunit D (203 aa).

Belongs to the V-ATPase D subunit family.

In terms of biological role, produces ATP from ADP in the presence of a proton gradient across the membrane. The protein is V-type ATP synthase subunit D of Chlamydia trachomatis serovar L2 (strain ATCC VR-902B / DSM 19102 / 434/Bu).